Consider the following 40-residue polypeptide: Large ribosomal subunit protein bL36 (40 aa).

This sequence belongs to the bacterial ribosomal protein bL36 family.

The sequence is that of Large ribosomal subunit protein bL36 from Corynebacterium kroppenstedtii (strain DSM 44385 / JCM 11950 / CIP 105744 / CCUG 35717).